The primary structure comprises 315 residues: Ribose-phosphate pyrophosphokinase (315 aa).

Residues 37 to 39 (DGE) and 96 to 97 (RQ) contribute to the ATP site. Residues histidine 131 and aspartate 170 each coordinate Mg(2+). Lysine 194 is a catalytic residue. D-ribose 5-phosphate contacts are provided by residues arginine 196, aspartate 220, and 224–228 (DTGGT).

This sequence belongs to the ribose-phosphate pyrophosphokinase family. Class I subfamily. In terms of assembly, homohexamer. Mg(2+) is required as a cofactor.

It localises to the cytoplasm. It catalyses the reaction D-ribose 5-phosphate + ATP = 5-phospho-alpha-D-ribose 1-diphosphate + AMP + H(+). It functions in the pathway metabolic intermediate biosynthesis; 5-phospho-alpha-D-ribose 1-diphosphate biosynthesis; 5-phospho-alpha-D-ribose 1-diphosphate from D-ribose 5-phosphate (route I): step 1/1. In terms of biological role, involved in the biosynthesis of the central metabolite phospho-alpha-D-ribosyl-1-pyrophosphate (PRPP) via the transfer of pyrophosphoryl group from ATP to 1-hydroxyl of ribose-5-phosphate (Rib-5-P). The chain is Ribose-phosphate pyrophosphokinase from Shewanella oneidensis (strain ATCC 700550 / JCM 31522 / CIP 106686 / LMG 19005 / NCIMB 14063 / MR-1).